The primary structure comprises 152 residues: Large ribosomal subunit protein uL15 (152 aa).

The disordered stretch occupies residues 1-57; it reads MTSTLNTLKSNSGSRKKKLRKGRGIAAGQGASCGFGMRGQKSRSGRPTRPGFEGGQM. Positions 14 to 23 are enriched in basic residues; sequence SRKKKLRKGR. Positions 25–37 are enriched in gly residues; sequence IAAGQGASCGFGM.

The protein belongs to the universal ribosomal protein uL15 family. In terms of assembly, part of the 50S ribosomal subunit.

In terms of biological role, binds to the 23S rRNA. In Prochlorococcus marinus (strain AS9601), this protein is Large ribosomal subunit protein uL15.